The sequence spans 273 residues: Imidazole glycerol phosphate synthase subunit HisF (273 aa).

Active-site residues include Asp11 and Asp134.

Belongs to the HisA/HisF family. As to quaternary structure, heterodimer of HisH and HisF.

The protein localises to the cytoplasm. It catalyses the reaction 5-[(5-phospho-1-deoxy-D-ribulos-1-ylimino)methylamino]-1-(5-phospho-beta-D-ribosyl)imidazole-4-carboxamide + L-glutamine = D-erythro-1-(imidazol-4-yl)glycerol 3-phosphate + 5-amino-1-(5-phospho-beta-D-ribosyl)imidazole-4-carboxamide + L-glutamate + H(+). The protein operates within amino-acid biosynthesis; L-histidine biosynthesis; L-histidine from 5-phospho-alpha-D-ribose 1-diphosphate: step 5/9. IGPS catalyzes the conversion of PRFAR and glutamine to IGP, AICAR and glutamate. The HisF subunit catalyzes the cyclization activity that produces IGP and AICAR from PRFAR using the ammonia provided by the HisH subunit. In Methanosarcina mazei (strain ATCC BAA-159 / DSM 3647 / Goe1 / Go1 / JCM 11833 / OCM 88) (Methanosarcina frisia), this protein is Imidazole glycerol phosphate synthase subunit HisF.